A 98-amino-acid chain; its full sequence is Feather keratin (98 aa).

Position 1 is an N-acetylalanine (alanine 1).

Belongs to the avian keratin family. The avian keratins (F-ker, S-ker, C-ker and B-ker) are a complex mixture of very similar polypeptides.

The protein is Feather keratin of Chroicocephalus novaehollandiae (Silver gull).